Here is a 410-residue protein sequence, read N- to C-terminus: Sprouty-related, EVH1 domain-containing protein 3 (410 aa).

The region spanning 1 to 113 (MVRVRAVVMA…KSLLAALAAL (113 aa)) is the WH1 domain. The disordered stretch occupies residues 117 to 210 (SLTPSSSSSS…PEPSEPLAGA (94 aa)). Composition is skewed to low complexity over residues 120 to 130 (PSSSSSSSSPS) and 147 to 165 (DSSS…AAAP). Positions 195 to 244 (LPFTGIPEPSEPLAGAGGLGWGGRGYEDYRRSGPPAPLALSTCVVRFAKT) constitute a KBD domain. Arg-240 is modified (asymmetric dimethylarginine). Residue Arg-248 is modified to Omega-N-methylarginine. Positions 258-288 (LPAPLTEAAPPAPPARPPPGPGPSSAPAKAS) are disordered. Over residues 267–281 (PPAPPARPPPGPGPS) the composition is skewed to pro residues. Residues 296–407 (RCVHCRALFR…CAGCGGRHEE (112 aa)) enclose the SPR domain.

As to quaternary structure, interacts with palmitoyltransferase ZDHHC17/HIP14; the interaction leads to palmitoylation of SPRED3. Post-translationally, phosphorylated on tyrosine. Palmitoylated by ZDHHC17/HIP14. In terms of processing, ubiquitinated.

Its subcellular location is the cell membrane. Functionally, tyrosine kinase substrate that inhibits growth-factor-mediated activation of MAP kinase. Inhibits fibroblast growth factor (FGF)-induced retinal lens fiber differentiation, probably by inhibiting FGF-mediated phosphorylation of ERK1/2. Inhibits TGFB-induced epithelial-to-mesenchymal transition in lens epithelial cells. In Homo sapiens (Human), this protein is Sprouty-related, EVH1 domain-containing protein 3 (SPRED3).